Here is a 145-residue protein sequence, read N- to C-terminus: Pseudoazurin (145 aa).

Positions 1–22 (MFHHSLAAAAAALLALAAPGFA) are cleaved as a signal peptide. Residues 27-115 (VHMLNKGESG…MGMVGLVQVG (89 aa)) form the Plastocyanin-like domain. Residues His-62, Cys-100, His-103, and Met-108 each coordinate Cu cation. Residues 126–145 (TAKMPKKARERMDAELAQVN) are disordered.

As to quaternary structure, homodimer. It depends on Cu cation as a cofactor.

It localises to the periplasm. Its function is as follows. This soluble electron transfer copper protein is required for the inactivation of copper-containing nitrite reductase in the presence of oxygen. The polypeptide is Pseudoazurin (pazS) (Paracoccus pantotrophus (Thiosphaera pantotropha)).